Consider the following 122-residue polypeptide: Putative syntaxin 6 (122 aa).

Residues 1-100 are Cytoplasmic-facing; it reads MSNYRYSKLN…AKLTHLEDES (100 aa). A t-SNARE coiled-coil homology domain is found at 31 to 93; that stretch reads EQIIQEQDDE…DTAMKKMAKL (63 aa). A helical; Anchor for type IV membrane protein transmembrane segment spans residues 101–121; the sequence is SQCKMIMVLSALLFFLVFVLL. Position 122 (Val-122) is a topological domain, extracellular.

It belongs to the syntaxin family.

It localises to the membrane. SNARE promoting movement of transport vesicles to target membranes. Potentially functions in retrograde trafficking and in the endocytic recycling pathway. The chain is Putative syntaxin 6 (syx-6) from Caenorhabditis elegans.